Reading from the N-terminus, the 684-residue chain is MQSREDVPRSRRLASPRGGRRPKRISKPSVSAFFTGPEELKDTAHSAALLAQLKSFYDARLLCDVTIEVVTPGSGPGTGRLFSCNRNVLAAACPYFKSMFTGGMYESQQASVTMHDVDAESFEVLVDYCYTGRVSLSEANVQRLYAASDMLQLEYVREACASFLARRLDLTNCTAILKFADAFDHHKLRSQAQSYIAHNFKQLSRMGSIREETLADLTLAQLLAVLRLDSLDIESERTVCHVAVQWLEAAAKERGPSAAEVFKCVRWMHFTEEDQDYLEGLLTKPIVKKYCLDVIEGALQMRYGDLLYKSLVPVPNSSSSSSSSNSLVSAAENPPQRLGMCAKEMVIFFGHPRDPFLCYDPYSGDIYTMPSPLTSFAHTKTVTSSAVCVSPDHDIYLAAQPRKDLWVYKPAQNSWQQLADRLLCREGMDVAYLNGYIYILGGRDPITGVKLKEVECYSVQRNQWALVAPVPHSFYSFELIVVQNYLYAVNSKRMLCYDPSHNMWLNCASLKRSDFQEACVFNDEIYCICDIPVMKVYNPARGEWRRISNIPLDSETHNYQIVNHDQKLLLITSTTPQWKKNRVTVYEYDTREDQWINIGTMLGLLQFDSGFICLCARVYPSCLEPGQSFITEEDDARSESSTEWDLDGFSELDSESGSSSSFSDDEVWVQVAPQRNAQDQQGSL.

The tract at residues 1-27 (MQSREDVPRSRRLASPRGGRRPKRISK) is disordered. Over residues 10-26 (SRRLASPRGGRRPKRIS) the composition is skewed to basic residues. Serine 29 is subject to Phosphoserine. A BTB domain is found at 63-138 (CDVTIEVVTP…CYTGRVSLSE (76 aa)). 5 Kelch repeats span residues 386 to 435 (AVCV…YLNG), 436 to 484 (YIYI…VVQN), 486 to 523 (LYAV…VFND), 524 to 564 (EIYC…IVNH), and 567 to 616 (KLLL…CLCA). Residues 630-666 (ITEEDDARSESSTEWDLDGFSELDSESGSSSSFSDDE) are disordered. Residues 631 to 654 (TEEDDARSESSTEWDLDGFSELDS) show a composition bias toward acidic residues. The short motif at 668–671 (WVQV) is the ATG8 interaction motif (AIM) element.

As to quaternary structure, core component of a BCR3 (BTB-CUL3-RBX1) E3 ubiquitin ligase complex, also named Cul3-RING ubiquitin ligase complex CUL3(KBTBD6/7), composed of CUL3, RBX1, KBTBD6 and KBTBD7. Interacts with GABARAP; the interaction is direct and is required for the ubiquitination of TIAM1. Interacts with GABARAPL1, GABARAPL2 and MAP1LC3B; the interaction is direct.

The protein localises to the cytoplasm. It localises to the nucleus. The protein operates within protein modification; protein ubiquitination. Functionally, as part of the CUL3(KBTBD6/7) E3 ubiquitin ligase complex functions as a substrate adapter for the RAC1 guanine exchange factor (GEF) TIAM1, mediating its 'Lys-48' ubiquitination and proteasomal degradation. By controlling this ubiquitination, regulates RAC1 signal transduction and downstream biological processes including the organization of the cytoskeleton, cell migration and cell proliferation. Ubiquitination of TIAM1 requires the membrane-associated protein GABARAP which may restrict locally the activity of the complex. This Homo sapiens (Human) protein is Kelch repeat and BTB domain-containing protein 7.